An 862-amino-acid chain; its full sequence is DNA topoisomerase 3-beta-1 (862 aa).

The region spanning 3-153 (TVLMVAEKPS…EKTVFRARFS (151 aa)) is the Toprim domain. The Topo IA-type catalytic domain occupies 171-593 (DHNEALSVDA…HTLDIFKRKF (423 aa)). Tyrosine 336 serves as the catalytic O-(5'-phospho-DNA)-tyrosine intermediate. The interval 820-855 (HPMHRGGPGRRQGRGRGRGRRPPGKPNPRRPKDKMS) is disordered. The segment covering 821 to 851 (PMHRGGPGRRQGRGRGRGRRPPGKPNPRRPK) has biased composition (basic residues).

It belongs to the type IA topoisomerase family. In terms of tissue distribution, highly expressed in testis.

It carries out the reaction ATP-independent breakage of single-stranded DNA, followed by passage and rejoining.. Functionally, releases the supercoiling and torsional tension of DNA introduced during the DNA replication and transcription by transiently cleaving and rejoining one strand of the DNA duplex. Introduces a single-strand break via transesterification at a target site in duplex DNA. The scissile phosphodiester is attacked by the catalytic tyrosine of the enzyme, resulting in the formation of a DNA-(5'-phosphotyrosyl)-enzyme intermediate and the expulsion of a 3'-OH DNA strand. The free DNA strand than undergoes passage around the unbroken strand thus removing DNA supercoils. Finally, in the religation step, the DNA 3'-OH attacks the covalent intermediate to expel the active-site tyrosine and restore the DNA phosphodiester backbone. Possesses negatively supercoiled DNA relaxing activity. The polypeptide is DNA topoisomerase 3-beta-1 (Top3b) (Mus musculus (Mouse)).